Reading from the N-terminus, the 382-residue chain is Serine/threonine-protein phosphatase 2A activator 2 (382 aa).

Residues 363–382 (SHKGVPTLGNRPGIKPIPFD) form a disordered region.

It belongs to the PTPA-type PPIase family.

Its subcellular location is the cytoplasm. It carries out the reaction [protein]-peptidylproline (omega=180) = [protein]-peptidylproline (omega=0). Its function is as follows. PPIases accelerate the folding of proteins. It catalyzes the cis-trans isomerization of proline imidic peptide bonds in oligopeptides. Acts as a regulatory subunit for PP2A-like phosphatases modulating their activity or substrate specificity, probably by inducing a conformational change in the catalytic subunit, a direct target of the PPIase. Can reactivate inactive phosphatase PP2A-phosphatase methylesterase complexes (PP2Ai) in presence of ATP and Mg(2+) by dissociating the inactive form from the complex. This Cryptococcus neoformans var. neoformans serotype D (strain B-3501A) (Filobasidiella neoformans) protein is Serine/threonine-protein phosphatase 2A activator 2 (RRD2).